The sequence spans 383 residues: Lipid-A-disaccharide synthase (383 aa).

It belongs to the LpxB family.

The catalysed reaction is 2-N,3-O-bis[(3R)-3-hydroxytetradecanoyl]-alpha-D-glucosaminyl 1-phosphate + UDP-2-N,3-O-bis[(3R)-3-hydroxytetradecanoyl]-alpha-D-glucosamine = lipid A disaccharide (E. coli) + UDP + H(+). The enzyme catalyses a lipid X + a UDP-2-N,3-O-bis[(3R)-3-hydroxyacyl]-alpha-D-glucosamine = a lipid A disaccharide + UDP + H(+). It functions in the pathway glycolipid biosynthesis; lipid IV(A) biosynthesis; lipid IV(A) from (3R)-3-hydroxytetradecanoyl-[acyl-carrier-protein] and UDP-N-acetyl-alpha-D-glucosamine: step 5/6. Its function is as follows. Condensation of UDP-2,3-diacylglucosamine and 2,3-diacylglucosamine-1-phosphate to form lipid A disaccharide, a precursor of lipid A, a phosphorylated glycolipid that anchors the lipopolysaccharide to the outer membrane of the cell. In Klebsiella pneumoniae subsp. pneumoniae (strain ATCC 700721 / MGH 78578), this protein is Lipid-A-disaccharide synthase.